The following is a 158-amino-acid chain: S-ribosylhomocysteine lyase (158 aa).

His54, His58, and Cys124 together coordinate Fe cation.

Belongs to the LuxS family. In terms of assembly, homodimer. Fe cation is required as a cofactor.

The catalysed reaction is S-(5-deoxy-D-ribos-5-yl)-L-homocysteine = (S)-4,5-dihydroxypentane-2,3-dione + L-homocysteine. Functionally, involved in the synthesis of autoinducer 2 (AI-2) which is secreted by bacteria and is used to communicate both the cell density and the metabolic potential of the environment. The regulation of gene expression in response to changes in cell density is called quorum sensing. Catalyzes the transformation of S-ribosylhomocysteine (RHC) to homocysteine (HC) and 4,5-dihydroxy-2,3-pentadione (DPD). This Limosilactobacillus reuteri (Lactobacillus reuteri) protein is S-ribosylhomocysteine lyase.